Consider the following 879-residue polypeptide: Alanine--tRNA ligase (879 aa).

His566, His570, Cys668, and His672 together coordinate Zn(2+).

The protein belongs to the class-II aminoacyl-tRNA synthetase family. Zn(2+) serves as cofactor.

It localises to the cytoplasm. The catalysed reaction is tRNA(Ala) + L-alanine + ATP = L-alanyl-tRNA(Ala) + AMP + diphosphate. Functionally, catalyzes the attachment of alanine to tRNA(Ala) in a two-step reaction: alanine is first activated by ATP to form Ala-AMP and then transferred to the acceptor end of tRNA(Ala). Also edits incorrectly charged Ser-tRNA(Ala) and Gly-tRNA(Ala) via its editing domain. This chain is Alanine--tRNA ligase, found in Clostridium botulinum (strain Alaska E43 / Type E3).